An 88-amino-acid chain; its full sequence is Small ribosomal subunit protein uS17 (88 aa).

The protein belongs to the universal ribosomal protein uS17 family. In terms of assembly, part of the 30S ribosomal subunit.

Its function is as follows. One of the primary rRNA binding proteins, it binds specifically to the 5'-end of 16S ribosomal RNA. This is Small ribosomal subunit protein uS17 from Prochlorococcus marinus (strain MIT 9301).